The primary structure comprises 443 residues: Fatty acid desaturase 3 (443 aa).

Topologically, residues Met-1–Pro-130 are cytoplasmic. The Cytochrome b5 heme-binding domain occupies Leu-18–Ala-95. A helical transmembrane segment spans residues Ala-131–Ile-151. Tyr-152 is a topological domain (lumenal). Residues Met-153 to Ala-173 traverse the membrane as a helical segment. Topologically, residues Gln-174–Asn-259 are cytoplasmic. Residues His-180–His-184 carry the Histidine box-1 motif. A Histidine box-2 motif is present at residues His-217–His-221. Residues His-260–Val-280 traverse the membrane as a helical segment. Residues Glu-281–Asn-282 are Lumenal-facing. Residues Leu-283–Ala-303 form a helical membrane-spanning segment. A topological domain (cytoplasmic) is located at residue Arg-304. Residues Phe-305 to Val-325 form a helical membrane-spanning segment. Topologically, residues Arg-326–Gln-443 are lumenal. The Histidine box-3 motif lies at Gln-381–His-385.

This sequence belongs to the fatty acid desaturase type 1 family.

It is found in the endoplasmic reticulum membrane. It catalyses the reaction an N-acylsphing-4-enine + 2 Fe(II)-[cytochrome b5] + O2 + 2 H(+) = an N-acyl-sphinga-4E,14Z-dienine + 2 Fe(III)-[cytochrome b5] + 2 H2O. The catalysed reaction is N-(hexanoyl)sphing-4-enine + 2 Fe(II)-[cytochrome b5] + O2 + 2 H(+) = N-hexanoyl-sphinga-4E,14Z-dienine + 2 Fe(III)-[cytochrome b5] + 2 H2O. The enzyme catalyses sphing-4-enine + 2 Fe(II)-[cytochrome b5] + O2 + 2 H(+) = sphinga-4E,14Z-dienine + 2 Fe(III)-[cytochrome b5] + 2 H2O. It carries out the reaction (11E)-octadecenoyl-CoA + 2 Fe(II)-[cytochrome b5] + O2 + 2 H(+) = (11E,13Z)-octadecadienoyl-CoA + 2 Fe(III)-[cytochrome b5] + 2 H2O. It catalyses the reaction N-acyl-1-deoxysphinganine + 2 Fe(II)-[cytochrome b5] + O2 + 2 H(+) = N-acyl-1-deoxysphing-14Z-enine + 2 Fe(III)-[cytochrome b5] + 2 H2O. The catalysed reaction is an N-acylsphinganine + 2 Fe(II)-[cytochrome b5] + O2 + 2 H(+) = an N-acylsphing-14Z-enine + 2 Fe(III)-[cytochrome b5] + 2 H2O. The protein operates within lipid metabolism; polyunsaturated fatty acid biosynthesis. Its pathway is lipid metabolism; sphingolipid metabolism. Functionally, mammals have different sphingoid bases that differ in their length and/or pattern of desaturation and hydroxyl groups. The predominant sphingoid base that comprises mammalian ceramides is sphing-4-enine (sphingosine or SPH) which has a trans (E) desaturation at carbon 4. FADS3 is a desaturase that introduces a cis (Z) double bond between carbon 14 and carbon 15 of the sphingoid base (also known as long chain base, LCB), producing LCBs such as sphinga-4,14-dienine (SPD, d18:2(4E,14Z)) from SPH. Prefers SPH-containing ceramides (N-acylsphing-4-enines) as substrates. Capable of metabolizing also the SPH in its free form. SPD ceramides occur widely in mammalian tissues and cells. Due to their unusual structure containing a cis double bond, SPD ceramides may have an opposite, negative role in lipid microdomain formation relative to conventional ceramides. Could be involved in the detoxification of 1-deoxy sphingolipids, by desaturating the cytotoxic 1-deoxysphinganine (1-deoxySA, m18:0), produced under pathological conditions, to 1-deoxysphingenine (1-deoxysphingosine, 1-deoxySO, m18:1). Although prefers SPH-containing ceramides (N-acylsphing-4-enines) as substrates, it also exhibits activity toward dihydrosphingosine-containing CERs (N-acylsphinganines) and produces 14Z-SPH-containing sphingolipids. Its desaturase mechanism involves an electron transfer facilitated by cytochrome b5. FADS3 also acts as a methyl-end fatty acyl coenzyme A (CoA) desaturase that introduces a cis double bond between the preexisting double bond and the terminal methyl group of the fatty acyl chain. Desaturates (11E)-octadecenoate (trans-vaccenoate, the predominant trans fatty acid in human milk) at carbon 13 to generate (11E,13Z)-octadecadienoate (also known as conjugated linoleic acid 11E,13Z-CLA). This chain is Fatty acid desaturase 3, found in Bos taurus (Bovine).